We begin with the raw amino-acid sequence, 371 residues long: Macronuclear solute carrier homolog CR-MSC (371 aa).

3 Solcar repeats span residues 16–111, 120–208, and 215–304; these read RMNY…FYDK, ARPD…CKEN, and PHWI…LSQF. 6 helical membrane-spanning segments follow: residues 22–42, 89–109, 126–146, 184–204, 221–241, and 281–301; these read FAAANVIALITHAATQPLDMV, TFFFRTVCYTTARVTAFGYFY, VAAGVLGGFIAGVVTNPIDIV, AGANGFKLAAICSSMTNIYDW, LWGTAVAVAIGTVVSMPFDMI, and FGSFYAGGEAYFLRLFLICYL.

It belongs to the mitochondrial carrier (TC 2.A.29) family.

The protein localises to the membrane. The polypeptide is Macronuclear solute carrier homolog CR-MSC (Oxytricha fallax).